Consider the following 750-residue polypeptide: Photosystem I P700 chlorophyll a apoprotein A1 (750 aa).

Helical transmembrane passes span 70 to 93 (VFSA…FHGA), 156 to 179 (LYCT…FHYH), 195 to 219 (LNHH…HVSL), 291 to 309 (TAHH…GHMY), 346 to 369 (WHAQ…HHMY), 385 to 411 (LSLF…IFMV), 433 to 455 (AIVS…LYIH), and 531 to 549 (FLVH…LILL). [4Fe-4S] cluster contacts are provided by Cys573 and Cys582. 2 consecutive transmembrane segments (helical) span residues 589-610 (HVFL…HFSW) and 664-686 (LSAY…MFLF). His675 is a chlorophyll a' binding site. Chlorophyll a contacts are provided by Met683 and Tyr691. Trp692 is a binding site for phylloquinone. Residues 724–744 (AVGVAHYLLGGIVTTWAFFLA) traverse the membrane as a helical segment.

It belongs to the PsaA/PsaB family. As to quaternary structure, the PsaA/B heterodimer binds the P700 chlorophyll special pair and subsequent electron acceptors. PSI consists of a core antenna complex that captures photons, and an electron transfer chain that converts photonic excitation into a charge separation. The eukaryotic PSI reaction center is composed of at least 11 subunits. Requires P700 is a chlorophyll a/chlorophyll a' dimer, A0 is one or more chlorophyll a, A1 is one or both phylloquinones and FX is a shared 4Fe-4S iron-sulfur center. as cofactor.

It localises to the plastid. It is found in the chloroplast thylakoid membrane. The enzyme catalyses reduced [plastocyanin] + hnu + oxidized [2Fe-2S]-[ferredoxin] = oxidized [plastocyanin] + reduced [2Fe-2S]-[ferredoxin]. PsaA and PsaB bind P700, the primary electron donor of photosystem I (PSI), as well as the electron acceptors A0, A1 and FX. PSI is a plastocyanin-ferredoxin oxidoreductase, converting photonic excitation into a charge separation, which transfers an electron from the donor P700 chlorophyll pair to the spectroscopically characterized acceptors A0, A1, FX, FA and FB in turn. Oxidized P700 is reduced on the lumenal side of the thylakoid membrane by plastocyanin. In Pinus koraiensis (Korean pine), this protein is Photosystem I P700 chlorophyll a apoprotein A1.